The following is a 668-amino-acid chain: Ubiquitin ligase complex F-box protein UFO1 (668 aa).

One can recognise an F-box domain in the interval 5–51 (GLVLQDLPPEILINIFSHLDEKDLFTLQELSTHFRNLIHDEELWKNL). Phosphoserine is present on serine 511. Residue threonine 514 is modified to Phosphothreonine. UIM domains are found at residues 547-566 (DEDEQLRRALEESQLIYETQ), 583-602 (EDDEEFLRAIRQSRVEDERR), and 651-668 (NVDEDLQLAIALSLSEIN). Polar residues predominate over residues 564-578 (ETQTNSSANHGNNTN). Disordered stretches follow at residues 564–585 (ETQTNSSANHGNNTNDEIDEDD) and 599–639 (DERR…TENT).

In terms of assembly, interacts with SKP1. Component of the probable SCF(UFO1) complex containing CDC53, SKP1, RBX1 and UFO1.

It participates in protein modification; protein ubiquitination. Its function is as follows. Substrate recognition component of a SCF (SKP1-CUL1-F-box protein) E3 ubiquitin-protein ligase complex which mediates the ubiquitination and subsequent proteasomal degradation of target proteins. Probably recognizes and binds to phosphorylated target proteins. The protein is Ubiquitin ligase complex F-box protein UFO1 (UFO1) of Saccharomyces cerevisiae (strain ATCC 204508 / S288c) (Baker's yeast).